Reading from the N-terminus, the 478-residue chain is Alpha-1,3-mannosyl-glycoprotein 4-beta-N-acetylglucosaminyltransferase C (478 aa).

At 1–23 the chain is on the cytoplasmic side; it reads MFKFHQMKHIFEILDKMRCLRKR. A helical; Signal-anchor for type II membrane protein membrane pass occupies residues 24–44; it reads STVSFLGVLVIFLLFMNLYIE. Residues 45–478 are Lumenal-facing; sequence DSYVLEGDKQ…IIRSISIWTS (434 aa). N-linked (GlcNAc...) asparagine glycans are attached at residues Asn84 and Asn215.

The protein belongs to the glycosyltransferase 54 family. The cofactor is a divalent metal cation.

It localises to the golgi apparatus membrane. The catalysed reaction is N(4)-{beta-D-GlcNAc-(1-&gt;2)-alpha-D-Man-(1-&gt;3)-[beta-D-GlcNAc-(1-&gt;2)-alpha-D-Man-(1-&gt;6)]-beta-D-Man-(1-&gt;4)-beta-D-GlcNAc-(1-&gt;4)-beta-D-GlcNAc}-L-asparaginyl-[protein] + UDP-N-acetyl-alpha-D-glucosamine = N(4)-{beta-D-GlcNAc-(1-&gt;2)-[beta-D-GlcNAc-(1-&gt;4)]-alpha-D-Man-(1-&gt;3)-[beta-D-GlcNAc-(1-&gt;2)-alpha-D-Man-(1-&gt;6)]-beta-D-Man-(1-&gt;4)-beta-D-GlcNAc-(1-&gt;4)-beta-D-GlcNAc}-L-asparaginyl-[protein] + UDP + H(+). It functions in the pathway protein modification; protein glycosylation. Functionally, glycosyltransferase that participates in the transfer of N-acetylglucosamine (GlcNAc) to the core mannose residues of N-linked glycans. Catalyzes the formation of the GlcNAcbeta1-4 branch on the GlcNAcbeta1-2Manalpha1-3 arm of the core structure of N-linked glycans. Essential for the production of tri- and tetra-antennary N-linked sugar chains. Does not catalyze the transfer of GlcNAc to the Manalpha1-6 arm to form GlcNAcBeta1-4Manalpha1-6 linkage ('GnT-VI' activity). The polypeptide is Alpha-1,3-mannosyl-glycoprotein 4-beta-N-acetylglucosaminyltransferase C (MGAT4C) (Macaca fascicularis (Crab-eating macaque)).